The sequence spans 691 residues: Alpha-1,4-glucan:maltose-1-phosphate maltosyltransferase (691 aa).

Residues Lys280, Gln341, and Asp376 each coordinate alpha-maltose 1-phosphate. Asp411 functions as the Nucleophile in the catalytic mechanism. Asn412 provides a ligand contact to alpha-maltose 1-phosphate. The Proton donor role is filled by Glu440. 550 to 551 (KY) contacts alpha-maltose 1-phosphate.

This sequence belongs to the glycosyl hydrolase 13 family. GlgE subfamily. Homodimer.

It catalyses the reaction alpha-maltose 1-phosphate + [(1-&gt;4)-alpha-D-glucosyl](n) = [(1-&gt;4)-alpha-D-glucosyl](n+2) + phosphate. Functionally, maltosyltransferase that uses maltose 1-phosphate (M1P) as the sugar donor to elongate linear or branched alpha-(1-&gt;4)-glucans. Is involved in a branched alpha-glucan biosynthetic pathway from trehalose, together with TreS, Mak and GlgB. In Arcanobacterium haemolyticum (strain ATCC 9345 / DSM 20595 / CCM 5947 / CCUG 17215 / LMG 16163 / NBRC 15585 / NCTC 8452 / 11018), this protein is Alpha-1,4-glucan:maltose-1-phosphate maltosyltransferase.